The sequence spans 209 residues: Ribosomal RNA large subunit methyltransferase E (209 aa).

S-adenosyl-L-methionine is bound by residues Gly63, Trp65, Asp83, Asp99, and Asp124. Lys164 functions as the Proton acceptor in the catalytic mechanism.

This sequence belongs to the class I-like SAM-binding methyltransferase superfamily. RNA methyltransferase RlmE family.

Its subcellular location is the cytoplasm. The catalysed reaction is uridine(2552) in 23S rRNA + S-adenosyl-L-methionine = 2'-O-methyluridine(2552) in 23S rRNA + S-adenosyl-L-homocysteine + H(+). In terms of biological role, specifically methylates the uridine in position 2552 of 23S rRNA at the 2'-O position of the ribose in the fully assembled 50S ribosomal subunit. The chain is Ribosomal RNA large subunit methyltransferase E from Pectobacterium atrosepticum (strain SCRI 1043 / ATCC BAA-672) (Erwinia carotovora subsp. atroseptica).